Reading from the N-terminus, the 245-residue chain is 1-(5-phosphoribosyl)-5-[(5-phosphoribosylamino)methylideneamino] imidazole-4-carboxamide isomerase (245 aa).

Catalysis depends on Asp7, which acts as the Proton acceptor. Asp129 functions as the Proton donor in the catalytic mechanism.

This sequence belongs to the HisA/HisF family.

It is found in the cytoplasm. The catalysed reaction is 1-(5-phospho-beta-D-ribosyl)-5-[(5-phospho-beta-D-ribosylamino)methylideneamino]imidazole-4-carboxamide = 5-[(5-phospho-1-deoxy-D-ribulos-1-ylimino)methylamino]-1-(5-phospho-beta-D-ribosyl)imidazole-4-carboxamide. It functions in the pathway amino-acid biosynthesis; L-histidine biosynthesis; L-histidine from 5-phospho-alpha-D-ribose 1-diphosphate: step 4/9. This Shewanella loihica (strain ATCC BAA-1088 / PV-4) protein is 1-(5-phosphoribosyl)-5-[(5-phosphoribosylamino)methylideneamino] imidazole-4-carboxamide isomerase.